A 430-amino-acid chain; its full sequence is Tyrosine--tRNA ligase (430 aa).

Tyr-32 provides a ligand contact to L-tyrosine. The short motif at 37–46 (PTADSLHIGH) is the 'HIGH' region element. Positions 172 and 176 each coordinate L-tyrosine. The 'KMSKS' region motif lies at 232–236 (KFGKT). Lys-235 serves as a coordination point for ATP. Residues 362–429 (IKAVDLCTEK…GKKNYYLLIA (68 aa)) enclose the S4 RNA-binding domain.

It belongs to the class-I aminoacyl-tRNA synthetase family. TyrS type 1 subfamily. In terms of assembly, homodimer.

The protein resides in the cytoplasm. It carries out the reaction tRNA(Tyr) + L-tyrosine + ATP = L-tyrosyl-tRNA(Tyr) + AMP + diphosphate + H(+). Catalyzes the attachment of tyrosine to tRNA(Tyr) in a two-step reaction: tyrosine is first activated by ATP to form Tyr-AMP and then transferred to the acceptor end of tRNA(Tyr). The sequence is that of Tyrosine--tRNA ligase from Parabacteroides distasonis (strain ATCC 8503 / DSM 20701 / CIP 104284 / JCM 5825 / NCTC 11152).